The primary structure comprises 82 residues: Nuclear protein 1 (82 aa).

Positions 1 to 82 (MATFPPATSA…SERKKRGARR (82 aa)) are disordered. Residues 17-28 (PEDEDSSLDESD) are compositionally biased toward acidic residues. Residues 65 to 82 (KLVTKLQNSERKKRGARR) carry the Nuclear localization signal motif.

This sequence belongs to the NUPR family. In terms of assembly, monomer. Directly interacts with MSL1 and binds MORF4L1, two components of histone acetyltransferase complex; the interaction with MORF4L1 may be mediated by MSL1. Interacts with EP300; this interaction enhances the effect of EP300 on PAX2 transcription factor activity. Interacts with PAXIP1; this interaction prevents PAXIP1 inhibition of PAX2 transcription factor activity. Interacts with COPS5; this interaction allows COPS5-dependent CDKN1B nuclear to cytoplasm translocation. Interacts with RNF2. Interacts with FOXO3; this interaction represses FOXO3 transactivation. Interacts with PTMA; negatively regulates apoptotic process. Interacts with MYOD1, EP300 and DDX5; this interaction coordinates the association of anti-proliferative and pro-myogenic proteins at the myogenin promoter. Interacts with TP53; interaction is stress-dependent. Forms a complex with EP300 and TP53; this complex binds CDKN1A promoter leading to transcriptional induction of CDKN1A. Phosphorylated in vitro by PKA and CK. Phosphorylation promotes DNA-binding activity. Post-translationally, acetylated by EP300 in vitro. In terms of tissue distribution, widely expressed, with high levels in liver, pancreas, prostate, ovary, colon, thyroid, spinal cord, trachea and adrenal gland, moderate levels in heart, placenta, lung, skeletal muscle, kidney, testis, small intestine, stomach and lymph node, and low levels in brain, spleen, thymus and bone marrow. Not detected in peripheral blood leukocytes.

The protein localises to the nucleus. It is found in the cytoplasm. It localises to the perinuclear region. Functionally, transcription regulator that converts stress signals into a program of gene expression that empowers cells with resistance to the stress induced by a change in their microenvironment. Thereby participates in the regulation of many processes namely cell-cycle, apoptosis, autophagy and DNA repair responses. Controls cell cycle progression and protects cells from genotoxic stress induced by doxorubicin through the complex formation with TP53 and EP300 that binds CDKN1A promoter leading to transcriptional induction of CDKN1A. Protects pancreatic cancer cells from stress-induced cell death by binding the RELB promoter and activating its transcription, leading to IER3 transactivation. Negatively regulates apoptosis through interaction with PTMA. Inhibits autophagy-induced apoptosis in cardiac cells through FOXO3 interaction, inducing cytoplasmic translocation of FOXO3 thereby preventing the FOXO3 association with the pro-autophagic BNIP3 promoter. Inhibits cell growth and facilitates programmed cell death by apoptosis after adriamycin-induced DNA damage through transactivation of TP53. Regulates methamphetamine-induced apoptosis and autophagy through DDIT3-mediated endoplasmic reticulum stress pathway. Participates in DNA repair following gamma-irradiation by facilitating DNA access of the transcription machinery through interaction with MSL1 leading to inhibition of histone H4' Lys-16' acetylation (H4K16ac). Coactivator of PAX2 transcription factor activity, both by recruiting EP300 to increase PAX2 transcription factor activity and by binding PAXIP1 to suppress PAXIP1-induced inhibition on PAX2. Positively regulates cell cycle progression through interaction with COPS5 inducing cytoplasmic translocation of CDKN1B leading to the CDKN1B degradation. Coordinates, through its interaction with EP300, the assiociation of MYOD1, EP300 and DDX5 to the MYOG promoter, leading to inhibition of cell-cycle progression and myogenic differentiation promotion. Negatively regulates beta cell proliferation via inhibition of cell-cycle regulatory genes expression through the suppression of their promoter activities. Also required for LHB expression and ovarian maturation. Exacerbates CNS inflammation and demyelination upon cuprizone treatment. In Homo sapiens (Human), this protein is Nuclear protein 1.